The chain runs to 508 residues: ATP synthase subunit alpha (508 aa).

170–177 (GDRQTGKT) lines the ATP pocket.

This sequence belongs to the ATPase alpha/beta chains family. As to quaternary structure, F-type ATPases have 2 components, CF(1) - the catalytic core - and CF(0) - the membrane proton channel. CF(1) has five subunits: alpha(3), beta(3), gamma(1), delta(1), epsilon(1). CF(0) has three main subunits: a(1), b(2) and c(9-12). The alpha and beta chains form an alternating ring which encloses part of the gamma chain. CF(1) is attached to CF(0) by a central stalk formed by the gamma and epsilon chains, while a peripheral stalk is formed by the delta and b chains.

Its subcellular location is the cell inner membrane. It carries out the reaction ATP + H2O + 4 H(+)(in) = ADP + phosphate + 5 H(+)(out). Its function is as follows. Produces ATP from ADP in the presence of a proton gradient across the membrane. The alpha chain is a regulatory subunit. The sequence is that of ATP synthase subunit alpha from Dictyoglomus turgidum (strain DSM 6724 / Z-1310).